The primary structure comprises 319 residues: Heavy metal-associated isoprenylated plant protein 9 (319 aa).

Basic and acidic residues-rich tracts occupy residues 1-11 (MGEEVKPEAKE) and 24-45 (EEKK…KPKE). The disordered stretch occupies residues 1–57 (MGEEVKPEAKEAASAPQAVPAEEEEKKKDVAEEKKVAAEEEKPKEEEEPQPPPPPPP). A coiled-coil region spans residues 21 to 48 (AEEEEKKKDVAEEKKVAAEEEKPKEEEE). HMA domains are found at residues 55 to 118 (PPPF…KRMA) and 144 to 208 (LTTV…KQAR). Residues Cys-66, Cys-69, Cys-155, and Cys-158 each coordinate a metal cation. The disordered stretch occupies residues 207-282 (ARIVPQPDPE…RDNEMTAMAQ (76 aa)). Residues 224-254 (QEEKKEESGEGNEKPPETGEEKEEEKKKEGE) are compositionally biased toward basic and acidic residues. Positions 255-268 (ENGEEGGGEEAAAT) are enriched in acidic residues. The residue at position 316 (Cys-316) is a Cysteine methyl ester. Cys-316 carries S-farnesyl cysteine lipidation. The propeptide at 317–319 (CIS) is removed in mature form.

It belongs to the HIPP family.

Its function is as follows. Heavy-metal-binding protein. This chain is Heavy metal-associated isoprenylated plant protein 9, found in Arabidopsis thaliana (Mouse-ear cress).